The chain runs to 156 residues: Small ribosomal subunit protein uS7 (156 aa).

Part of the 30S ribosomal subunit. Contacts proteins S9 and S11.

Functionally, one of the primary rRNA binding proteins, it binds directly to 16S rRNA where it nucleates assembly of the head domain of the 30S subunit. Is located at the subunit interface close to the decoding center, probably blocks exit of the E-site tRNA. The polypeptide is Small ribosomal subunit protein uS7 (Rhodopseudomonas palustris (strain ATCC BAA-98 / CGA009)).